Here is a 92-residue protein sequence, read N- to C-terminus: UPF0235 protein CCA_00247 (92 aa).

Belongs to the UPF0235 family.

This is UPF0235 protein CCA_00247 from Chlamydia caviae (strain ATCC VR-813 / DSM 19441 / 03DC25 / GPIC) (Chlamydophila caviae).